The primary structure comprises 200 residues: Dephospho-CoA kinase (200 aa).

One can recognise a DPCK domain in the interval 4–200 (TIGLTGSVAT…TFIERFVNNK (197 aa)). 12–17 (ATGKST) is an ATP binding site.

This sequence belongs to the CoaE family.

The protein localises to the cytoplasm. The enzyme catalyses 3'-dephospho-CoA + ATP = ADP + CoA + H(+). It functions in the pathway cofactor biosynthesis; coenzyme A biosynthesis; CoA from (R)-pantothenate: step 5/5. Its function is as follows. Catalyzes the phosphorylation of the 3'-hydroxyl group of dephosphocoenzyme A to form coenzyme A. The protein is Dephospho-CoA kinase of Listeria innocua serovar 6a (strain ATCC BAA-680 / CLIP 11262).